Consider the following 192-residue polypeptide: Xanthine phosphoribosyltransferase (192 aa).

Positions 20 and 27 each coordinate xanthine. 128-132 (ANGQA) is a 5-phospho-alpha-D-ribose 1-diphosphate binding site. Lys156 lines the xanthine pocket.

This sequence belongs to the purine/pyrimidine phosphoribosyltransferase family. Xpt subfamily. As to quaternary structure, homodimer.

It is found in the cytoplasm. It carries out the reaction XMP + diphosphate = xanthine + 5-phospho-alpha-D-ribose 1-diphosphate. It participates in purine metabolism; XMP biosynthesis via salvage pathway; XMP from xanthine: step 1/1. In terms of biological role, converts the preformed base xanthine, a product of nucleic acid breakdown, to xanthosine 5'-monophosphate (XMP), so it can be reused for RNA or DNA synthesis. The sequence is that of Xanthine phosphoribosyltransferase from Ligilactobacillus salivarius (strain UCC118) (Lactobacillus salivarius).